A 181-amino-acid chain; its full sequence is Protein canopy homolog 1 (181 aa).

The first 21 residues, 1–21 (MAILLHFGVLITAFLSSHVEG), serve as a signal peptide directing secretion. Positions 25–177 (PILYCGACRA…EETGLCKEYL (153 aa)) constitute a Saposin B-type domain. Disulfide bonds link Cys-29-Cys-173, Cys-32-Cys-166, and Cys-87-Cys-139. Positions 178–181 (HNEL) match the Prevents secretion from ER motif.

The protein belongs to the canopy family.

Its subcellular location is the endoplasmic reticulum. Functionally, plays an role in early embryonic development. This chain is Protein canopy homolog 1 (cnpy1), found in Xenopus laevis (African clawed frog).